Here is a 32-residue protein sequence, read N- to C-terminus: MSDIN-like toxin proprotein 11 (32 aa).

Positions 1–10 are excised as a propeptide; sequence MSDINATRLP. The segment at 1–32 is disordered; sequence MSDINATRLPGMEPPSPMPCVGDADNFTLTRG. Positions 11 to 19 form a cross-link, cyclopeptide (Gly-Pro); that stretch reads GMEPPSPMP. Positions 20-32 are excised as a propeptide; sequence CVGDADNFTLTRG.

This sequence belongs to the MSDIN fungal toxin family. In terms of processing, processed by the macrocyclase-peptidase enzyme POPB to yield a toxic cyclic nonapeptide. POPB first removes 10 residues from the N-terminus. Conformational trapping of the remaining peptide forces the enzyme to release this intermediate rather than proceed to macrocyclization. The enzyme rebinds the remaining peptide in a different conformation and catalyzes macrocyclization of the N-terminal 9 residues.

Probable toxin that belongs to the MSDIN-like toxin family responsible for a large number of food poisoning cases and deaths. This Amanita bisporigera (Destroying angel) protein is MSDIN-like toxin proprotein 11.